Here is a 750-residue protein sequence, read N- to C-terminus: Mitochondrial 15S rRNA processing factor CCM1 (750 aa).

The transit peptide at 1–82 directs the protein to the mitochondrion; sequence MFIGKKAPAA…KELKQLTRSV (82 aa). 4 PPR repeats span residues 263-297, 298-333, 336-370, and 371-406; these read SRAT…GLQL, SPVV…AGSM, QTRE…KLDF, and NQNI…GWEP.

It belongs to the CCM1 family. As to quaternary structure, binds to mitochondrial small subunit 15S rRNA.

It is found in the mitochondrion. Its function is as follows. Regulates mitochondrial small subunit maturation by controlling 15S rRNA 5'-end processing. Localizes to the 5' precursor of the 15S rRNA in a position that is subsequently occupied by mS47 in the mature yeast mtSSU. Uses structure and sequence-specific RNA recognition, binding to a single-stranded region of the precursor and specifically recognizing bases -6 to -1. The exchange of Ccm1 for mS47 is coupled to the irreversible removal of precursor rRNA that is accompanied by conformational changes of the mitoribosomal proteins uS5m and mS26. These conformational changes signal completion of 5'-end rRNA processing through protection of the mature 5'-end of the 15S rRNA and stabilization of mS47. The removal of the 5' precursor together with the dissociation of Ccm1 may be catalyzed by the 5'-3' exoribonuclease Pet127. Involved in the specific removal of group I introns in mitochondrial encoded transcripts. This is Mitochondrial 15S rRNA processing factor CCM1 (CCM1) from Clavispora lusitaniae (strain ATCC 42720) (Yeast).